Reading from the N-terminus, the 219-residue chain is 7-cyano-7-deazaguanine synthase (219 aa).

An ATP-binding site is contributed by 10–20 (FSGGQDSTTCL). Zn(2+)-binding residues include Cys188, Cys196, Cys199, and Cys202.

It belongs to the QueC family. Requires Zn(2+) as cofactor.

The enzyme catalyses 7-carboxy-7-deazaguanine + NH4(+) + ATP = 7-cyano-7-deazaguanine + ADP + phosphate + H2O + H(+). The protein operates within purine metabolism; 7-cyano-7-deazaguanine biosynthesis. In terms of biological role, catalyzes the ATP-dependent conversion of 7-carboxy-7-deazaguanine (CDG) to 7-cyano-7-deazaguanine (preQ(0)). In Neisseria gonorrhoeae (strain NCCP11945), this protein is 7-cyano-7-deazaguanine synthase.